A 152-amino-acid chain; its full sequence is Flagellar assembly factor FliW (152 aa).

Belongs to the FliW family. In terms of assembly, interacts with translational regulator CsrA and flagellin(s).

It localises to the cytoplasm. Functionally, acts as an anti-CsrA protein, binds CsrA and prevents it from repressing translation of its target genes, one of which is flagellin. Binds to flagellin and participates in the assembly of the flagellum. The sequence is that of Flagellar assembly factor FliW from Desulfitobacterium hafniense (strain DSM 10664 / DCB-2).